A 340-amino-acid chain; its full sequence is Tetrathionate reductase subunit C (340 aa).

9 consecutive transmembrane segments (helical) span residues 19-39 (WLPW…AALF), 57-77 (ALLI…ADLH), 94-114 (WMPW…LWFL), 128-148 (VTKW…IYTG), 164-184 (AFPV…MIVA), 195-215 (ILWG…MWVS), 236-256 (YYAV…SLAL), 266-286 (VLLV…LLIQ), and 306-326 (TDGW…LIII).

This sequence belongs to the NrfD family. As to quaternary structure, probably composed of three subunits: TtrA, TtrB and TtrC.

The protein resides in the cell inner membrane. Part of a membrane-bound tetrathionate reductase that catalyzes the reduction of tetrathionate to thiosulfate. TtrC probably anchors TtrA and TtrB to the periplasmic face of the cytoplasmic membrane. May transfer electrons from membrane quinol to TtrB. During mice infection, the ability to use tetrathionate as an electron acceptor is a growth advantage for S.typhimurium over the competing microbiota in the lumen of the inflamed gut. This Salmonella typhimurium (strain LT2 / SGSC1412 / ATCC 700720) protein is Tetrathionate reductase subunit C (ttrC).